We begin with the raw amino-acid sequence, 371 residues long: tRNA-specific 2-thiouridylase MnmA (371 aa).

ATP is bound by residues 14–21 (GMSGGVDS) and Met-40. Residues 100–102 (NPD) form an interaction with target base in tRNA region. Cys-105 serves as the catalytic Nucleophile. Residues Cys-105 and Cys-205 are joined by a disulfide bond. An ATP-binding site is contributed by Gly-129. The interaction with tRNA stretch occupies residues 155-157 (KDQ). Residue Cys-205 is the Cysteine persulfide intermediate of the active site. The tract at residues 321–322 (RY) is interaction with tRNA.

It belongs to the MnmA/TRMU family.

Its subcellular location is the cytoplasm. The catalysed reaction is S-sulfanyl-L-cysteinyl-[protein] + uridine(34) in tRNA + AH2 + ATP = 2-thiouridine(34) in tRNA + L-cysteinyl-[protein] + A + AMP + diphosphate + H(+). Functionally, catalyzes the 2-thiolation of uridine at the wobble position (U34) of tRNA, leading to the formation of s(2)U34. This is tRNA-specific 2-thiouridylase MnmA from Bordetella parapertussis (strain 12822 / ATCC BAA-587 / NCTC 13253).